The chain runs to 88 residues: Yop proteins translocation protein S (88 aa).

Helical transmembrane passes span tryptophan 15–valine 35 and leucine 49–leucine 69.

The protein belongs to the FliQ/MopD/SpaQ family.

It is found in the cell membrane. Component of the Yop secretion machinery. The protein is Yop proteins translocation protein S (yscS) of Yersinia pestis.